The chain runs to 275 residues: 2,3,4,5-tetrahydropyridine-2,6-dicarboxylate N-succinyltransferase (275 aa).

Positions 108 and 145 each coordinate substrate.

It belongs to the transferase hexapeptide repeat family. In terms of assembly, homotrimer.

It localises to the cytoplasm. It catalyses the reaction (S)-2,3,4,5-tetrahydrodipicolinate + succinyl-CoA + H2O = (S)-2-succinylamino-6-oxoheptanedioate + CoA. It functions in the pathway amino-acid biosynthesis; L-lysine biosynthesis via DAP pathway; LL-2,6-diaminopimelate from (S)-tetrahydrodipicolinate (succinylase route): step 1/3. The polypeptide is 2,3,4,5-tetrahydropyridine-2,6-dicarboxylate N-succinyltransferase (Maricaulis maris (strain MCS10) (Caulobacter maris)).